Reading from the N-terminus, the 154-residue chain is 17 kDa surface antigen (154 aa).

The first 19 residues, 1–19, serve as a signal peptide directing secretion; sequence MKLLSKIMIIALAASMLQA. Cysteine 20 carries N-palmitoyl cysteine lipidation. Cysteine 20 is lipidated: S-diacylglycerol cysteine.

Belongs to the rickettsiale 17 kDa surface antigen family.

It localises to the cell outer membrane. The chain is 17 kDa surface antigen (omp) from Rickettsia australis.